The primary structure comprises 910 residues: MQRHELPPGRRSPATRITLLAILLFLLFGLRSFAGYAIEIEWWKELGQLNTWFSMLYYGIAPVAVATLVAFLALWISHARALKFAGTGLGEHKLYARISTLALLFLAWFIAAGAIDTWTVVRFAGSRGLPAAAAGWHDNIFNKPLSFYLFDLPFYSLLRSYVLAVIIFCVLLYWIAARGWQLRFRMPHLRDAQELDPAFFKLEGGLESRFLRGAAVIGLIALAVRFYLGRYEMAYNEHGSFLVGIDYVDQNIGLPLQWLVIFACLAAAAFVAMGRWFLAALMALALVVDFAAPRIVSALYVRPNEISLQRPYIETHIHATRSAFGIEQNVREVEFKAKPEAPIDVAANKPLLDNVRLWDTRAFHDTVTQIQALRPYYVFADTDVDRYTIDGQYRQVLLTPRELDLRQLPAARANWINPAFIYTHGYGVVLAPVSQITPDGLPVLFIENAPPEVKASSLKLTRPELYYGEVTHEPVFVDTAREEFNYPSGESNVTSRYEGKGGFPISSLGMRMAAAIREGEPNILLTSYLKPNSRMMIHRKVEDRLHELAGFLEWDSDPYLVITDAGRLVWMIDGYTTSEAHPYARSVDVPDIGRVNYIRNAVKATVDAYDGETHMYVFAPDDPIISAYQRLFPDLFQPSDKMPADLRRHARYPETLFRAQAEIYRTYHMLDPQSFYNKEDLWDLARHTTAQNGGAEPVTPTYVVATLPGEAKPEFLLLIPFTPRNKDNLIGLMVARCDGKSLGDMVVLQLSKQELIFGPMQIGARINQDQTISKDLTLWNQQGSQVLRGQILVLPVGNTFLYVDPIYIQATEARMPQLKKIVLAVGNRLIYADTYDQALAQLSSGAQALVTEATAPGSSTAPKAAAVAPATGDARLQSVRDHLRRYRELASQGKWSDAGKELEAIEALVK.

The next 7 membrane-spanning stretches (helical) occupy residues 17 to 37 (ITLLAILLFLLFGLRSFAGYA), 56 to 76 (LYYGIAPVAVATLVAFLALWI), 101 to 121 (LALLFLAWFIAAGAIDTWTVV), 157 to 177 (LLRSYVLAVIIFCVLLYWIAA), 210 to 229 (FLRGAAVIGLIALAVRFYLG), 252 to 272 (IGLPLQWLVIFACLAAAAFVA), and 276 to 296 (WFLAALMALALVVDFAAPRIV).

The protein belongs to the UPF0182 family.

It is found in the cell membrane. The sequence is that of UPF0182 protein Acid_6445 from Solibacter usitatus (strain Ellin6076).